The following is a 402-amino-acid chain: Enoyl-[acyl-carrier-protein] reductase [NADH] (402 aa).

NAD(+) is bound by residues 48-53 (GASSGY), 74-75 (FE), 111-112 (DA), and 140-141 (LA). Y226 is a binding site for substrate. The active-site Proton donor is the Y236. NAD(+) is bound by residues K245 and 274–276 (VVT).

This sequence belongs to the TER reductase family. As to quaternary structure, monomer.

It carries out the reaction a 2,3-saturated acyl-[ACP] + NAD(+) = a (2E)-enoyl-[ACP] + NADH + H(+). It participates in lipid metabolism; fatty acid biosynthesis. Involved in the final reduction of the elongation cycle of fatty acid synthesis (FAS II). Catalyzes the reduction of a carbon-carbon double bond in an enoyl moiety that is covalently linked to an acyl carrier protein (ACP). This is Enoyl-[acyl-carrier-protein] reductase [NADH] from Xanthomonas campestris pv. campestris (strain 8004).